We begin with the raw amino-acid sequence, 522 residues long: Glutamate--cysteine ligase (522 aa).

This sequence belongs to the glutamate--cysteine ligase type 1 family. Type 1 subfamily.

It catalyses the reaction L-cysteine + L-glutamate + ATP = gamma-L-glutamyl-L-cysteine + ADP + phosphate + H(+). It participates in sulfur metabolism; glutathione biosynthesis; glutathione from L-cysteine and L-glutamate: step 1/2. In Vibrio parahaemolyticus serotype O3:K6 (strain RIMD 2210633), this protein is Glutamate--cysteine ligase.